The chain runs to 423 residues: Maltooligosaccharide ABC transporter solute-binding lipoprotein (423 aa).

A signal peptide spans 1–24 (MSSKFMKSTAVLGTVTLASLLLVA). Cys25 carries N-palmitoyl cysteine lipidation. Residue Cys25 is the site of S-diacylglycerol cysteine attachment. Substrate is bound by residues Tyr52, Asp77, Asp83, 103-104 (DR), Glu148, Asp193, Asn196, 251-254 (EGAG), Trp274, and Lys307.

It belongs to the bacterial solute-binding protein 1 family.

The protein localises to the cell membrane. In terms of biological role, part of an ABC transporter complex involved in the uptake of maltodextrins. Binds glycogen-derived linear maltooligosaccharides increasing in size from maltotriose to maltooctaose with the highest affinity for maltotriose. Has a very weak affinity for maltose. Has also a very low affinity for maltotetraitol, indicating that the binding is selective for maltooligosaccharides with an intact reducing end. The chain is Maltooligosaccharide ABC transporter solute-binding lipoprotein (malX) from Streptococcus pneumoniae (strain ATCC BAA-255 / R6).